The chain runs to 235 residues: Large ribosomal subunit protein uL1 (235 aa).

Belongs to the universal ribosomal protein uL1 family. In terms of assembly, part of the 50S ribosomal subunit.

Functionally, binds directly to 23S rRNA. The L1 stalk is quite mobile in the ribosome, and is involved in E site tRNA release. Protein L1 is also a translational repressor protein, it controls the translation of the L11 operon by binding to its mRNA. The protein is Large ribosomal subunit protein uL1 of Halothermothrix orenii (strain H 168 / OCM 544 / DSM 9562).